Consider the following 248-residue polypeptide: MYITEASIDSYSSLYQISAVEVGQHFYWEIGDLRVHGQVLITSWVVIGILLTVAFLGTRKLETVPNATQNFVEYVLQFIRDLARTQIGEEEYRDWVPFVGTLFLFIFVSNWSGALVPWKLIELPHGELAAPTNDINTTVALALLTSGAYFYAGFHKRGLSYFGKYLQPTPVLLPINILEDFTKPLSLSFRLFGNILADELVVAVLVSLVPLVVPIPMMFLGLFTSGIQALIFATLAAAYIGESMEGHH.

Transmembrane regions (helical) follow at residues 37 to 57, 96 to 116, 135 to 155, 200 to 220, and 221 to 241; these read GQVLITSWVVIGILLTVAFLG, VPFVGTLFLFIFVSNWSGALV, INTTVALALLTSGAYFYAGFH, LVVAVLVSLVPLVVPIPMMFL, and GLFTSGIQALIFATLAAAYIG.

It belongs to the ATPase A chain family. F-type ATPases have 2 components, CF(1) - the catalytic core - and CF(0) - the membrane proton channel. CF(1) has five subunits: alpha(3), beta(3), gamma(1), delta(1), epsilon(1). CF(0) has four main subunits: a, b, b' and c.

The protein localises to the plastid. Its subcellular location is the chloroplast thylakoid membrane. Functionally, key component of the proton channel; it plays a direct role in the translocation of protons across the membrane. This chain is ATP synthase subunit a, chloroplastic, found in Staurastrum punctulatum (Green alga).